The sequence spans 212 residues: Deoxyribose-phosphate aldolase (212 aa).

Residue D90 is the Proton donor/acceptor of the active site. The Schiff-base intermediate with acetaldehyde role is filled by K151. K176 serves as the catalytic Proton donor/acceptor.

The protein belongs to the DeoC/FbaB aldolase family. DeoC type 1 subfamily.

It localises to the cytoplasm. It catalyses the reaction 2-deoxy-D-ribose 5-phosphate = D-glyceraldehyde 3-phosphate + acetaldehyde. It participates in carbohydrate degradation; 2-deoxy-D-ribose 1-phosphate degradation; D-glyceraldehyde 3-phosphate and acetaldehyde from 2-deoxy-alpha-D-ribose 1-phosphate: step 2/2. Catalyzes a reversible aldol reaction between acetaldehyde and D-glyceraldehyde 3-phosphate to generate 2-deoxy-D-ribose 5-phosphate. The polypeptide is Deoxyribose-phosphate aldolase (Halobacterium salinarum (strain ATCC 29341 / DSM 671 / R1)).